Here is a 27-residue protein sequence, read N- to C-terminus: Ferric reductase B (27 aa).

In terms of assembly, homodimer. The cofactor is FAD.

The enzyme catalyses 2 a Fe(II)-siderophore + NAD(+) + H(+) = 2 a Fe(III)-siderophore + NADH. In terms of biological role, reductase activity that acts on Fe(3+)-chelates and uses both NADH and NADPH as electron donors. May play a role in iron uptake. The polypeptide is Ferric reductase B (ferB) (Paracoccus denitrificans).